Here is a 143-residue protein sequence, read N- to C-terminus: AP-2 complex subunit sigma (143 aa).

Belongs to the adaptor complexes small subunit family. As to quaternary structure, adaptor protein complex 2 (AP-2) is a heterotetramer composed of two large adaptins (alpha-type subunit APL3 and beta-type subunit APL1), a medium chain (mu-type subunit APM4) and a small adaptin (sigma-type subunit APS2).

The protein localises to the cell membrane. It is found in the membrane. It localises to the coated pit. Functionally, component of the adaptor complexes which link clathrin to receptors in coated vesicles. Clathrin-associated protein complexes are believed to interact with the cytoplasmic tails of membrane proteins, leading to their selection and concentration. This Gibberella zeae (strain ATCC MYA-4620 / CBS 123657 / FGSC 9075 / NRRL 31084 / PH-1) (Wheat head blight fungus) protein is AP-2 complex subunit sigma (APS2).